The primary structure comprises 37 residues: Large ribosomal subunit protein bL36 (37 aa).

The protein belongs to the bacterial ribosomal protein bL36 family.

This is Large ribosomal subunit protein bL36 from Magnetococcus marinus (strain ATCC BAA-1437 / JCM 17883 / MC-1).